Consider the following 949-residue polypeptide: Collagen alpha-2(I) chain (949 aa).

The tract at residues 1–949 (SGGFDFSFLP…FGYEGDFYRA (949 aa)) is disordered. Residues Pro10, Pro13, Pro34, and Pro40 each carry the 4-hydroxyproline modification. The segment covering 27–66 (LMGPRGPPGASGAPGPQGFQGPAGEPGEPGQTGPAGARGP) has biased composition (low complexity). A 5-hydroxylysine; alternate modification is found at Lys95. An O-linked (Gal...) hydroxylysine; alternate glycan is attached at Lys95. Composition is skewed to low complexity over residues 147–162 (SVGP…SAGP) and 208–229 (PGAN…AGAP). Positions 263 to 272 (GESGGKGEPG) are enriched in gly residues. The span at 273–283 (SAGPQGPPGSS) shows a compositional bias: low complexity. A compositionally biased stretch (gly residues) spans 292–313 (NGEGSTGPTGPPGLRGGPGSRG). 4-hydroxyproline occurs at positions 348 and 351. A compositionally biased stretch (low complexity) spans 377–396 (LPGIDGRPGPIGPAGARGEA). The span at 435-444 (GVQGGKGEQG) shows a compositional bias: gly residues. Composition is skewed to low complexity over residues 490–507 (PGES…SRGP) and 519–529 (EPGVVGAPGTA). Over residues 530–539 (GPAGSGGLPG) the composition is skewed to gly residues. Composition is skewed to low complexity over residues 562–606 (VGTT…PRGS) and 613–633 (VGPA…QPGA). Over residues 634–643 (KGERGTKGPK) the composition is skewed to basic and acidic residues. Over residues 651–661 (PTGPVGSAGPA) the composition is skewed to low complexity. Residues 671-680 (GSRGDGGPPG) are compositionally biased toward gly residues. Positions 682–691 (TGFPGAAGRT) are enriched in low complexity. Residues 722–736 (GPVGRGETGAGGPPG) are compositionally biased toward gly residues. 3 stretches are compositionally biased toward low complexity: residues 737–771 (FTGE…LGLP), 779–792 (LPGV…PGPL), and 810–825 (EPGP…ALGP). Residues 835–846 (RGDKGEPGEKGP) show a composition bias toward basic and acidic residues. Positions 921 to 931 (PAGPPGPPGPP) are enriched in pro residues.

Belongs to the fibrillar collagen family. Trimers of one alpha 2(I) and two alpha 1(I) chains. Interacts (via C-terminus) with TMEM131 (via PapD-L domain); the interaction is direct and is involved in assembly and TRAPPIII ER-to-Golgi transport complex-dependent secretion of collagen. Prolines at the third position of the tripeptide repeating unit (G-X-Y) are hydroxylated in some or all of the chains. Expressed in bones.

Its subcellular location is the secreted. The protein localises to the extracellular space. It is found in the extracellular matrix. Its function is as follows. Type I collagen is a member of group I collagen (fibrillar forming collagen). The sequence is that of Collagen alpha-2(I) chain from Acratocnus ye (Hispaniolan ground sloth).